A 382-amino-acid polypeptide reads, in one-letter code: Lipid-A-disaccharide synthase (382 aa).

This sequence belongs to the LpxB family.

The enzyme catalyses 2-N,3-O-bis[(3R)-3-hydroxytetradecanoyl]-alpha-D-glucosaminyl 1-phosphate + UDP-2-N,3-O-bis[(3R)-3-hydroxytetradecanoyl]-alpha-D-glucosamine = lipid A disaccharide (E. coli) + UDP + H(+). It carries out the reaction a lipid X + a UDP-2-N,3-O-bis[(3R)-3-hydroxyacyl]-alpha-D-glucosamine = a lipid A disaccharide + UDP + H(+). It functions in the pathway glycolipid biosynthesis; lipid IV(A) biosynthesis; lipid IV(A) from (3R)-3-hydroxytetradecanoyl-[acyl-carrier-protein] and UDP-N-acetyl-alpha-D-glucosamine: step 5/6. Functionally, condensation of UDP-2,3-diacylglucosamine and 2,3-diacylglucosamine-1-phosphate to form lipid A disaccharide, a precursor of lipid A, a phosphorylated glycolipid that anchors the lipopolysaccharide to the outer membrane of the cell. This is Lipid-A-disaccharide synthase from Escherichia coli O7:K1 (strain IAI39 / ExPEC).